The chain runs to 1261 residues: Apoptotic protease-activating factor 1 (1261 aa).

The CARD domain occupies 1-90 (MEERARSRLL…GDLASLLHSD (90 aa)). Residues 106–417 (VSPSVQAILS…LELEEVEDVL (312 aa)) form the NB-ARC domain. 154–161 (GMAGSGKS) is an ATP binding site. WD repeat units lie at residues 615 to 654 (PHQG…KLLE), 657 to 696 (AHEE…LIRE), 700 to 743 (EHEE…SQNT), 746 to 785 (GHME…EWKS), 798 to 836 (EIKA…LLLK), 840 to 879 (SRLS…KKAE), 882 to 921 (GHLS…TSSA), 964 to 1003 (ELSS…ASVK), 1006 to 1045 (GHTK…CMVL), 1047 to 1088 (GHME…MLQD), 1091 to 1130 (CHEG…MLFL), 1133 to 1172 (GHKD…LLKI), and 1184 to 1223 (YHAG…QTFY).

As to quaternary structure, monomer. Oligomerizes upon binding of cytochrome c and dATP.

Its subcellular location is the cytoplasm. Functionally, oligomeric Apaf-1 mediates the cytochrome c-dependent autocatalytic activation of pro-caspase-9 (Apaf-3), leading to the activation of caspase-3 and apoptosis. This activation requires ATP. This is Apoptotic protease-activating factor 1 (apaf1) from Danio rerio (Zebrafish).